Reading from the N-terminus, the 312-residue chain is Glyoxylate/hydroxypyruvate reductase A (312 aa).

Arg227 is an active-site residue. Catalysis depends on His275, which acts as the Proton donor.

This sequence belongs to the D-isomer specific 2-hydroxyacid dehydrogenase family. GhrA subfamily.

The protein localises to the cytoplasm. It carries out the reaction glycolate + NADP(+) = glyoxylate + NADPH + H(+). The catalysed reaction is (R)-glycerate + NAD(+) = 3-hydroxypyruvate + NADH + H(+). The enzyme catalyses (R)-glycerate + NADP(+) = 3-hydroxypyruvate + NADPH + H(+). Catalyzes the NADPH-dependent reduction of glyoxylate and hydroxypyruvate into glycolate and glycerate, respectively. The protein is Glyoxylate/hydroxypyruvate reductase A of Enterobacter sp. (strain 638).